We begin with the raw amino-acid sequence, 188 residues long: Ribosome-recycling factor (188 aa).

This sequence belongs to the RRF family.

It localises to the cytoplasm. In terms of biological role, responsible for the release of ribosomes from messenger RNA at the termination of protein biosynthesis. May increase the efficiency of translation by recycling ribosomes from one round of translation to another. The sequence is that of Ribosome-recycling factor from Cereibacter sphaeroides (strain ATCC 17025 / ATH 2.4.3) (Rhodobacter sphaeroides).